Reading from the N-terminus, the 438-residue chain is DNA primase DnaG (438 aa).

Residues 171 to 245 (DAILVVEGRA…DIDYVARAPE (75 aa)) enclose the Toprim domain. Mg(2+)-binding residues include E177, D219, and D221.

The protein belongs to the archaeal DnaG primase family. As to quaternary structure, forms a ternary complex with MCM helicase and DNA. Component of the archaeal exosome complex. Mg(2+) serves as cofactor.

The enzyme catalyses ssDNA + n NTP = ssDNA/pppN(pN)n-1 hybrid + (n-1) diphosphate.. RNA polymerase that catalyzes the synthesis of short RNA molecules used as primers for DNA polymerase during DNA replication. Also part of the exosome, which is a complex involved in RNA degradation. Acts as a poly(A)-binding protein that enhances the interaction between heteromeric, adenine-rich transcripts and the exosome. This chain is DNA primase DnaG, found in Methanothrix thermoacetophila (strain DSM 6194 / JCM 14653 / NBRC 101360 / PT) (Methanosaeta thermophila).